Here is a 245-residue protein sequence, read N- to C-terminus: Putative transport permease YvfS (245 aa).

6 helical membrane-spanning segments follow: residues 20–40 (YFVLWSLIMPIAFYYFFTNVV), 53–73 (HYLMSMTVFSVMGSSIMTLGI), 103–123 (IGQSVIHVLSITVIFLFGAII), 137–157 (GLWILFGALPFLALGTLIGLM), 164–184 (AGISNVLYMLLALGGGMWMPF), and 214–234 (GSPTWKNILILIAYMMLFMLL). An ABC transmembrane type-2 domain is found at 20 to 242 (YFVLWSLIMP…LLSKYIRRKQ (223 aa)).

It belongs to the ABC-2 integral membrane protein family.

The protein localises to the cell membrane. This Bacillus subtilis (strain 168) protein is Putative transport permease YvfS (yvfS).